The chain runs to 579 residues: Nuclear hormone receptor family member nhr-22 (579 aa).

The segment at residues 93-173 is a DNA-binding region (nuclear receptor); it reads SRSCHVCSSP…AGMRRELVQA (81 aa). 2 NR C4-type zinc fingers span residues 96–117 and 133–161; these read CHVC…CKAC and CIGT…FIKC. A compositionally biased stretch (low complexity) spans 233 to 242; that stretch reads LSPDPSSSQP. The disordered stretch occupies residues 233-256; the sequence is LSPDPSSSQPLDMTVTPPPLHRST. Residues 304–577 form the NR LBD domain; it reads EVENKIFELV…SIMYDLLSFR (274 aa).

Belongs to the nuclear hormone receptor family.

It is found in the nucleus. Orphan nuclear receptor. The sequence is that of Nuclear hormone receptor family member nhr-22 (nhr-22) from Caenorhabditis elegans.